Consider the following 132-residue polypeptide: Small ribosomal subunit protein uS8 (132 aa).

This sequence belongs to the universal ribosomal protein uS8 family. In terms of assembly, part of the 30S ribosomal subunit. Contacts proteins S5 and S12.

Its function is as follows. One of the primary rRNA binding proteins, it binds directly to 16S rRNA central domain where it helps coordinate assembly of the platform of the 30S subunit. This Mycoplasmopsis synoviae (strain 53) (Mycoplasma synoviae) protein is Small ribosomal subunit protein uS8.